A 367-amino-acid chain; its full sequence is Peptide chain release factor 2 (367 aa).

An N5-methylglutamine modification is found at Gln254.

This sequence belongs to the prokaryotic/mitochondrial release factor family. In terms of processing, methylated by PrmC. Methylation increases the termination efficiency of RF2.

It localises to the cytoplasm. Its function is as follows. Peptide chain release factor 2 directs the termination of translation in response to the peptide chain termination codons UGA and UAA. This Acidovorax ebreus (strain TPSY) (Diaphorobacter sp. (strain TPSY)) protein is Peptide chain release factor 2.